Reading from the N-terminus, the 439-residue chain is Ribosomal protein uS12 methylthiotransferase RimO (439 aa).

Residues 5–115 (PRISFTSLGC…VLDAVHRALP (111 aa)) form the MTTase N-terminal domain. Cysteine 14, cysteine 50, cysteine 79, cysteine 146, cysteine 150, and cysteine 153 together coordinate [4Fe-4S] cluster. The 238-residue stretch at 132–369 (LTPRHYAYLK…MARQQKISAR (238 aa)) folds into the Radical SAM core domain. The TRAM domain occupies 372–438 (KRKVGTRQQI…QYDLHGSVAG (67 aa)).

Belongs to the methylthiotransferase family. RimO subfamily. The cofactor is [4Fe-4S] cluster.

The protein resides in the cytoplasm. It carries out the reaction L-aspartate(89)-[ribosomal protein uS12]-hydrogen + (sulfur carrier)-SH + AH2 + 2 S-adenosyl-L-methionine = 3-methylsulfanyl-L-aspartate(89)-[ribosomal protein uS12]-hydrogen + (sulfur carrier)-H + 5'-deoxyadenosine + L-methionine + A + S-adenosyl-L-homocysteine + 2 H(+). Functionally, catalyzes the methylthiolation of an aspartic acid residue of ribosomal protein uS12. The protein is Ribosomal protein uS12 methylthiotransferase RimO of Bradyrhizobium diazoefficiens (strain JCM 10833 / BCRC 13528 / IAM 13628 / NBRC 14792 / USDA 110).